A 147-amino-acid chain; its full sequence is Large ribosomal subunit protein uL13 (147 aa).

This sequence belongs to the universal ribosomal protein uL13 family. As to quaternary structure, part of the 50S ribosomal subunit.

This protein is one of the early assembly proteins of the 50S ribosomal subunit, although it is not seen to bind rRNA by itself. It is important during the early stages of 50S assembly. This is Large ribosomal subunit protein uL13 from Rhodococcus erythropolis (strain PR4 / NBRC 100887).